A 270-amino-acid polypeptide reads, in one-letter code: Mediator of RNA polymerase II transcription subunit 4 (270 aa).

Residues methionine 1–glycine 22 are disordered. Alanine 2 is modified (N-acetylalanine). Residues threonine 26 to lysine 131 are a coiled coil. Serine 32 is modified (phosphoserine). Residues methionine 227–aspartate 270 are disordered. Low complexity predominate over residues serine 259–aspartate 270.

It belongs to the Mediator complex subunit 4 family. In terms of assembly, component of the Mediator complex, which is composed of MED1, MED4, MED6, MED7, MED8, MED9, MED10, MED11, MED12, MED13, MED13L, MED14, MED15, MED16, MED17, MED18, MED19, MED20, MED21, MED22, MED23, MED24, MED25, MED26, MED27, MED29, MED30, MED31, CCNC, CDK8 and CDC2L6/CDK11. The MED12, MED13, CCNC and CDK8 subunits form a distinct module termed the CDK8 module. Mediator containing the CDK8 module is less active than Mediator lacking this module in supporting transcriptional activation. Individual preparations of the Mediator complex lacking one or more distinct subunits have been variously termed ARC, CRSP, DRIP, PC2, SMCC and TRAP.

It localises to the nucleus. Functionally, component of the Mediator complex, a coactivator involved in the regulated transcription of nearly all RNA polymerase II-dependent genes. Mediator functions as a bridge to convey information from gene-specific regulatory proteins to the basal RNA polymerase II transcription machinery. Mediator is recruited to promoters by direct interactions with regulatory proteins and serves as a scaffold for the assembly of a functional preinitiation complex with RNA polymerase II and the general transcription factors. This chain is Mediator of RNA polymerase II transcription subunit 4 (Med4), found in Rattus norvegicus (Rat).